The primary structure comprises 82 residues: Conotoxin C11GB (82 aa).

The first 22 residues, 1 to 22 (MKLTCVMIVAVLFLTAWTVVTA), serve as a signal peptide directing secretion. Residues 23-53 (EPHSSNVLENLYLKAHHEMENPEASKLNTRD) constitute a propeptide that is removed on maturation. Cystine bridges form between cysteine 55–cysteine 72, cysteine 62–cysteine 76, and cysteine 71–cysteine 80.

Belongs to the conotoxin O1 superfamily. As to expression, expressed by the venom duct.

It is found in the secreted. The chain is Conotoxin C11GB from Conus vexillum (Flag cone).